A 129-amino-acid polypeptide reads, in one-letter code: Glycine cleavage system H protein (129 aa).

One can recognise a Lipoyl-binding domain in the interval 24-106; the sequence is LVRVGISAFA…HGEGWLLVLR (83 aa). Lysine 65 is modified (N6-lipoyllysine).

Belongs to the GcvH family. The glycine cleavage system is composed of four proteins: P, T, L and H. Requires (R)-lipoate as cofactor.

Functionally, the glycine cleavage system catalyzes the degradation of glycine. The H protein shuttles the methylamine group of glycine from the P protein to the T protein. The chain is Glycine cleavage system H protein from Parasynechococcus marenigrum (strain WH8102).